The sequence spans 215 residues: Cytochrome b6 (215 aa).

The helical transmembrane segment at 32 to 52 (IFYCLGGITLTCFLVQVATGF) threads the bilayer. A heme c-binding site is contributed by cysteine 35. Residues histidine 86 and histidine 100 each contribute to the heme b site. 3 helical membrane passes run 90-110 (ASMMVLMMILHVFRVYLTGGF), 116-136 (LTWVTGVVLGVLTASFGVTGY), and 186-206 (LHTFVLPLLTAVFMLMHFPMI). 2 residues coordinate heme b: histidine 187 and histidine 202.

This sequence belongs to the cytochrome b family. PetB subfamily. In terms of assembly, the 4 large subunits of the cytochrome b6-f complex are cytochrome b6, subunit IV (17 kDa polypeptide, PetD), cytochrome f and the Rieske protein, while the 4 small subunits are PetG, PetL, PetM and PetN. The complex functions as a dimer. It depends on heme b as a cofactor. Heme c serves as cofactor.

Its subcellular location is the plastid. It localises to the chloroplast thylakoid membrane. Functionally, component of the cytochrome b6-f complex, which mediates electron transfer between photosystem II (PSII) and photosystem I (PSI), cyclic electron flow around PSI, and state transitions. The chain is Cytochrome b6 from Lactuca sativa (Garden lettuce).